Reading from the N-terminus, the 502-residue chain is Lysine--tRNA ligase (502 aa).

Mg(2+)-binding residues include Glu-403 and Glu-410.

Belongs to the class-II aminoacyl-tRNA synthetase family. As to quaternary structure, homodimer. Requires Mg(2+) as cofactor.

It localises to the cytoplasm. It carries out the reaction tRNA(Lys) + L-lysine + ATP = L-lysyl-tRNA(Lys) + AMP + diphosphate. This chain is Lysine--tRNA ligase, found in Synechococcus sp. (strain CC9605).